Consider the following 221-residue polypeptide: MFHGIPATPGVGAPGNKPELYEEVKLYKNAREREKYDNMAELFAVVKTMQALEKAYIKDCVTPNEYTAACSRLLVQYKAAFRQVQGSEISSIDEFCRKFRLDCPLAMERIKEDRPITIKDDKGNLNRCIADVVSLFITVMDKLRLEIRAMDEIQPDLRELMETMHRMSHLPPDFEGRQTVSQWLQTLSGMSASDELDDSQVRQMLFDLESAYNAFNRFLHA.

Position 1 is an N-acetylmethionine (Met1). Residues 13-120 (APGNKPELYE…KEDRPITIKD (108 aa)) enclose the VPS28 N-terminal domain. In terms of domain architecture, VPS28 C-terminal spans 124 to 220 (NLNRCIADVV…AYNAFNRFLH (97 aa)).

Belongs to the VPS28 family. In terms of assembly, component of the ESCRT-I complex (endosomal sorting complex required for transport I) which consists of TSG101, VPS28, a VPS37 protein (VPS37A to -D) and MVB12A or MVB12B in a 1:1:1:1 stoichiometry. Interacts with TSG101, VPS37B, VPS37C, MVB12A and MVB12B. Component of an ESCRT-I complex (endosomal sorting complex required for transport I) which consists of TSG101, VPS28, VPS37A and UBAP1 in a 1:1:1:1 stoichiometry. Interacts with VPS36; the interaction mediates the association with the ESCRT-II complex. Interacts with SNF8 and VPS25. Interacts with CEP55.

The protein localises to the cell membrane. Its subcellular location is the late endosome membrane. Component of the ESCRT-I complex, a regulator of vesicular trafficking process. The polypeptide is Vacuolar protein sorting-associated protein 28 homolog (Vps28) (Mus musculus (Mouse)).